The sequence spans 431 residues: Serine--tRNA ligase (431 aa).

Position 237–239 (237–239) interacts with L-serine; that stretch reads TAE. 268 to 270 contributes to the ATP binding site; it reads RSE. Glutamate 291 is a binding site for L-serine. Residue 355–358 participates in ATP binding; sequence EISS. Serine 390 is a binding site for L-serine.

It belongs to the class-II aminoacyl-tRNA synthetase family. Type-1 seryl-tRNA synthetase subfamily. Homodimer. The tRNA molecule binds across the dimer.

Its subcellular location is the cytoplasm. It carries out the reaction tRNA(Ser) + L-serine + ATP = L-seryl-tRNA(Ser) + AMP + diphosphate + H(+). It catalyses the reaction tRNA(Sec) + L-serine + ATP = L-seryl-tRNA(Sec) + AMP + diphosphate + H(+). It participates in aminoacyl-tRNA biosynthesis; selenocysteinyl-tRNA(Sec) biosynthesis; L-seryl-tRNA(Sec) from L-serine and tRNA(Sec): step 1/1. Catalyzes the attachment of serine to tRNA(Ser). Is also able to aminoacylate tRNA(Sec) with serine, to form the misacylated tRNA L-seryl-tRNA(Sec), which will be further converted into selenocysteinyl-tRNA(Sec). The polypeptide is Serine--tRNA ligase (Neisseria meningitidis serogroup B (strain ATCC BAA-335 / MC58)).